Consider the following 98-residue polypeptide: Integration host factor subunit beta (98 aa).

This sequence belongs to the bacterial histone-like protein family. Heterodimer of an alpha and a beta chain.

Functionally, this protein is one of the two subunits of integration host factor, a specific DNA-binding protein that functions in genetic recombination as well as in transcriptional and translational control. This Pseudomonas putida (strain GB-1) protein is Integration host factor subunit beta.